The sequence spans 238 residues: Ribonuclease PH (238 aa).

Phosphate is bound by residues R86 and 124–126 (GTR).

The protein belongs to the RNase PH family. In terms of assembly, homohexameric ring arranged as a trimer of dimers.

The enzyme catalyses tRNA(n+1) + phosphate = tRNA(n) + a ribonucleoside 5'-diphosphate. Its function is as follows. Phosphorolytic 3'-5' exoribonuclease that plays an important role in tRNA 3'-end maturation. Removes nucleotide residues following the 3'-CCA terminus of tRNAs; can also add nucleotides to the ends of RNA molecules by using nucleoside diphosphates as substrates, but this may not be physiologically important. Probably plays a role in initiation of 16S rRNA degradation (leading to ribosome degradation) during starvation. The chain is Ribonuclease PH from Azorhizobium caulinodans (strain ATCC 43989 / DSM 5975 / JCM 20966 / LMG 6465 / NBRC 14845 / NCIMB 13405 / ORS 571).